Here is a 336-residue protein sequence, read N- to C-terminus: MNTEATHDQNEALTTGARLRNAREQLGLSQQAVAERLCLKVSTVRDIEEDKAPADLASTFLRGYIRSYARLVHIPEEELLPGLEKQAPLRAAKVAPMQSFSLGKRRKKRDGWLMTFTWLVLFVVIGLSGAWWWQDHKAQQEEITTMADQSSAELNNNQSQSVPLDTSTTTDQAMATTPTSPVDTTATNTQTPAATTAPSPTVDSQQNAVVPPSQANVDTAATPAPAATTTPDGAAPLPTDQAGVTTPAVDPNALVMNFTADCWLEVTDATGKKLFSGMQRKDGNLNLTGQAPYKLKIGAPAAVQIQYQGKPVDLSRFIRTNQVARLTLNAEQSPAQ.

The Cytoplasmic portion of the chain corresponds to 1-111 (MNTEATHDQN…LGKRRKKRDG (111 aa)). The 53-residue stretch at 19-71 (LRNAREQLGLSQQAVAERLCLKVSTVRDIEEDKAPADLASTFLRGYIRSYARL) folds into the HTH cro/C1-type domain. The segment at residues 30-49 (QQAVAERLCLKVSTVRDIEE) is a DNA-binding region (H-T-H motif). The chain crosses the membrane as a helical; Signal-anchor for type II membrane protein span at residues 112-132 (WLMTFTWLVLFVVIGLSGAWW). Residues 133–336 (WQDHKAQQEE…TLNAEQSPAQ (204 aa)) lie on the Periplasmic side of the membrane. Polar residues predominate over residues 148–164 (DQSSAELNNNQSQSVPL). The segment at 148–245 (DQSSAELNNN…PLPTDQAGVT (98 aa)) is disordered. The span at 165-201 (DTSTTTDQAMATTPTSPVDTTATNTQTPAATTAPSPT) shows a compositional bias: low complexity. The span at 202 to 217 (VDSQQNAVVPPSQANV) shows a compositional bias: polar residues. The span at 218-240 (DTAATPAPAATTTPDGAAPLPTD) shows a compositional bias: low complexity.

This sequence belongs to the RodZ family.

Its subcellular location is the cell inner membrane. Functionally, cytoskeletal protein that is involved in cell-shape control through regulation of the length of the long axis. The sequence is that of Cytoskeleton protein RodZ from Escherichia coli O7:K1 (strain IAI39 / ExPEC).